The following is a 361-amino-acid chain: Phosphoserine aminotransferase (361 aa).

R42 serves as a coordination point for L-glutamate. Pyridoxal 5'-phosphate-binding positions include 76–77 (AT), W102, T152, D172, and Q195. K196 carries the post-translational modification N6-(pyridoxal phosphate)lysine. 237–238 (NT) is a pyridoxal 5'-phosphate binding site.

It belongs to the class-V pyridoxal-phosphate-dependent aminotransferase family. SerC subfamily. In terms of assembly, homodimer. Pyridoxal 5'-phosphate is required as a cofactor.

The protein localises to the cytoplasm. It catalyses the reaction O-phospho-L-serine + 2-oxoglutarate = 3-phosphooxypyruvate + L-glutamate. It carries out the reaction 4-(phosphooxy)-L-threonine + 2-oxoglutarate = (R)-3-hydroxy-2-oxo-4-phosphooxybutanoate + L-glutamate. The protein operates within amino-acid biosynthesis; L-serine biosynthesis; L-serine from 3-phospho-D-glycerate: step 2/3. It functions in the pathway cofactor biosynthesis; pyridoxine 5'-phosphate biosynthesis; pyridoxine 5'-phosphate from D-erythrose 4-phosphate: step 3/5. Its function is as follows. Catalyzes the reversible conversion of 3-phosphohydroxypyruvate to phosphoserine and of 3-hydroxy-2-oxo-4-phosphonooxybutanoate to phosphohydroxythreonine. The chain is Phosphoserine aminotransferase from Xanthomonas euvesicatoria pv. vesicatoria (strain 85-10) (Xanthomonas campestris pv. vesicatoria).